Reading from the N-terminus, the 424-residue chain is Serine--tRNA ligase (424 aa).

230 to 232 (TAE) contacts L-serine. An ATP-binding site is contributed by 261-263 (RSE). E284 contributes to the L-serine binding site. An ATP-binding site is contributed by 348 to 351 (EISS). S384 is a binding site for L-serine.

This sequence belongs to the class-II aminoacyl-tRNA synthetase family. Type-1 seryl-tRNA synthetase subfamily. In terms of assembly, homodimer. The tRNA molecule binds across the dimer.

Its subcellular location is the cytoplasm. The enzyme catalyses tRNA(Ser) + L-serine + ATP = L-seryl-tRNA(Ser) + AMP + diphosphate + H(+). It carries out the reaction tRNA(Sec) + L-serine + ATP = L-seryl-tRNA(Sec) + AMP + diphosphate + H(+). It functions in the pathway aminoacyl-tRNA biosynthesis; selenocysteinyl-tRNA(Sec) biosynthesis; L-seryl-tRNA(Sec) from L-serine and tRNA(Sec): step 1/1. Its function is as follows. Catalyzes the attachment of serine to tRNA(Ser). Is also able to aminoacylate tRNA(Sec) with serine, to form the misacylated tRNA L-seryl-tRNA(Sec), which will be further converted into selenocysteinyl-tRNA(Sec). The polypeptide is Serine--tRNA ligase (Streptococcus pneumoniae (strain Hungary19A-6)).